A 181-amino-acid chain; its full sequence is Putative J domain-containing protein R266 (181 aa).

A J domain is found at 6–70 (NYYQILDVDN…LKRLNYDSYL (65 aa)).

The sequence is that of Putative J domain-containing protein R266 from Acanthamoeba polyphaga (Amoeba).